Consider the following 257-residue polypeptide: MESLPVFPNKFKAALAAKQVQIGCWSALSNPISTEVLGLAGFDWLVLDGEHAPNDISTFIPQLMALKGSASAPVVRVPTNEPVIIKRLLDIGFYNFLIPFVETKEEAEQAVASTRYPPEGIRGVSVSHRANMFGTVADYFAQSNKNITILVQIESQQGVDNVDAIAATEGVDCIFVGPSDLAAALGHLGNASHPDVQKAIQHIFNRASAHGKPSGILAPVEADARRYLEWGATFVAVGSDLGVFRSATQKLADTFKK.

The Proton acceptor role is filled by H51. Q152 provides a ligand contact to substrate. Residue E154 coordinates Mg(2+). Positions 179 and 180 each coordinate substrate. D180 lines the Mg(2+) pocket.

The protein belongs to the HpcH/HpaI aldolase family. KDGluc aldolase subfamily. As to quaternary structure, homohexamer; trimer of dimers. Mg(2+) serves as cofactor.

The catalysed reaction is 5-dehydro-4-deoxy-D-glucarate = 2-hydroxy-3-oxopropanoate + pyruvate. The enzyme catalyses 2-dehydro-3-deoxy-D-glucarate = 2-hydroxy-3-oxopropanoate + pyruvate. It participates in carbohydrate acid metabolism; galactarate degradation; D-glycerate from galactarate: step 2/3. In terms of biological role, catalyzes the reversible retro-aldol cleavage of both 5-keto-4-deoxy-D-glucarate and 2-keto-3-deoxy-D-glucarate to pyruvate and tartronic semialdehyde. The polypeptide is 5-keto-4-deoxy-D-glucarate aldolase (Shigella boydii serotype 18 (strain CDC 3083-94 / BS512)).